A 548-amino-acid polypeptide reads, in one-letter code: Probable malate:quinone oxidoreductase (548 aa).

The disordered stretch occupies residues 521-548 (DKPQAADSTPKPQLKPQPVQKEVADIAL). Residues 530 to 541 (PKPQLKPQPVQK) are compositionally biased toward low complexity.

It belongs to the MQO family. It depends on FAD as a cofactor.

It carries out the reaction (S)-malate + a quinone = a quinol + oxaloacetate. The protein operates within carbohydrate metabolism; tricarboxylic acid cycle; oxaloacetate from (S)-malate (quinone route): step 1/1. This chain is Probable malate:quinone oxidoreductase, found in Shigella sonnei (strain Ss046).